Reading from the N-terminus, the 219-residue chain is Protein ERP1 (219 aa).

Positions 1-22 (MLLTSLLQVFACCLVLPAQVTA) are cleaved as a signal peptide. Residues 23-186 (FYYYTSGAER…RDASEAVNSR (164 aa)) lie on the Lumenal side of the membrane. Positions 32-131 (RKCFHKELSK…KTKIDVEFQV (100 aa)) constitute a GOLD domain. A helical transmembrane segment spans residues 187-207 (AMWWIVIQLIVLAVTCGWQMK). Residues 208-219 (HLGKFFVKQKIL) lie on the Cytoplasmic side of the membrane.

Belongs to the EMP24/GP25L family. As to quaternary structure, associates with EMP24, ERV25 and ERP2.

Its subcellular location is the endoplasmic reticulum membrane. Involved in vesicular protein trafficking. This Saccharomyces cerevisiae (strain ATCC 204508 / S288c) (Baker's yeast) protein is Protein ERP1 (ERP1).